The chain runs to 379 residues: Tryptophan 2,3-dioxygenase (379 aa).

Substrate-binding positions include 57–61 and arginine 128; that span reads FIITH. Histidine 312 contributes to the heme binding site. Substrate is bound at residue threonine 327.

The protein belongs to the tryptophan 2,3-dioxygenase family. Homotetramer. Dimer of dimers. Requires heme as cofactor.

It carries out the reaction L-tryptophan + O2 = N-formyl-L-kynurenine. The protein operates within amino-acid degradation; L-tryptophan degradation via kynurenine pathway; L-kynurenine from L-tryptophan: step 1/2. It participates in pigment biosynthesis; ommochrome biosynthesis. Functionally, heme-dependent dioxygenase that catalyzes the oxidative cleavage of the L-tryptophan (L-Trp) pyrrole ring and converts L-tryptophan to N-formyl-L-kynurenine. Catalyzes the oxidative cleavage of the indole moiety. This is Tryptophan 2,3-dioxygenase from Drosophila sechellia (Fruit fly).